A 281-amino-acid polypeptide reads, in one-letter code: Nuclear transcription factor Y subunit nfya-2 (281 aa).

Disordered regions lie at residues M1–Q27 and R163–E261. Residues M150 to G173 carry the Subunit association domain (SAD) motif. Positions R166–R188 are enriched in basic and acidic residues. Residues Q180–N204 constitute a DNA-binding region (NFYA/HAP2-type). The segment covering Q189–G198 has biased composition (basic residues). A compositionally biased stretch (low complexity) spans N204–A220.

This sequence belongs to the NFYA/HAP2 subunit family. In terms of assembly, forms a heterotrimeric transcription factor complex (nfya-2-NF-Y complex) composed of nfya-2, nfyb-1 and nfyc-1. Interacts with the nfyb-1 and nfyc-1 dimer; the interaction is required for subsequent binding to the 5'-CCAAT-3' box motif in DNA. Does not interact with either nfyb-1 or nfyc-1 in their monomeric form. As to expression, highly expressed in certain parts of the gonads. Expressed in the spermatheca, intestine and in some neurons in the head. Not expressed in the intestine, the hypodermis, body wall muscle surrounding the pseudocoelomic space, secretory cells in the pharyngeal terminal bulb wall, in the small ganglia surrounding the pharynx and in the neurons running anteriorly to the sensory organs in the head.

Its subcellular location is the nucleus. In terms of biological role, component of the sequence-specific heterotrimeric transcription factor (nfya-2-NF-Y) which specifically recognizes a 5'-CCAAT-3' box motif found in the promoters of its target genes to regulate their expression and control cellular identity in particular tissue types. In association with the components in the nfya-2-NF-Y complex, may repress the expression of the T-box transcription factor tbx-2 throughout larval development, which most likely restricts its expression to certain tissues. The protein is Nuclear transcription factor Y subunit nfya-2 of Caenorhabditis elegans.